The primary structure comprises 482 residues: Glutamyl-tRNA(Gln) amidotransferase subunit A (482 aa).

Catalysis depends on charge relay system residues Lys-75 and Ser-150. Residue Ser-174 is the Acyl-ester intermediate of the active site.

Belongs to the amidase family. GatA subfamily. Heterotrimer of A, B and C subunits.

It catalyses the reaction L-glutamyl-tRNA(Gln) + L-glutamine + ATP + H2O = L-glutaminyl-tRNA(Gln) + L-glutamate + ADP + phosphate + H(+). Allows the formation of correctly charged Gln-tRNA(Gln) through the transamidation of misacylated Glu-tRNA(Gln) in organisms which lack glutaminyl-tRNA synthetase. The reaction takes place in the presence of glutamine and ATP through an activated gamma-phospho-Glu-tRNA(Gln). This is Glutamyl-tRNA(Gln) amidotransferase subunit A from Thermosynechococcus vestitus (strain NIES-2133 / IAM M-273 / BP-1).